We begin with the raw amino-acid sequence, 212 residues long: ATP synthase F(0) complex subunit a (212 aa).

The next 6 helical transmembrane spans lie at 3 to 23 (MMGIPLILIAIFLPTLLIYTS), 58 to 78 (WAAMLMTLMIXLLSMNLLGLL), 87 to 107 (QLSMNMALAIPLWLATVLTGL), 128 to 148 (IPLLIIIETVSLFIRPLALGV), 169 to 189 (FVLLPMMTLTALSTFIVLVLL), and 192 to 212 (LEIAVAMIQAYVFTLLLTLYL).

Belongs to the ATPase A chain family. As to quaternary structure, component of the ATP synthase complex composed at least of ATP5F1A/subunit alpha, ATP5F1B/subunit beta, ATP5MC1/subunit c (homooctomer), MT-ATP6/subunit a, MT-ATP8/subunit 8, ATP5ME/subunit e, ATP5MF/subunit f, ATP5MG/subunit g, ATP5MK/subunit k, ATP5MJ/subunit j, ATP5F1C/subunit gamma, ATP5F1D/subunit delta, ATP5F1E/subunit epsilon, ATP5PF/subunit F6, ATP5PB/subunit b, ATP5PD/subunit d, ATP5PO/subunit OSCP. ATP synthase complex consists of a soluble F(1) head domain (subunits alpha(3) and beta(3)) - the catalytic core - and a membrane F(0) domain - the membrane proton channel (subunits c, a, 8, e, f, g, k and j). These two domains are linked by a central stalk (subunits gamma, delta, and epsilon) rotating inside the F1 region and a stationary peripheral stalk (subunits F6, b, d, and OSCP). Interacts with DNAJC30; interaction is direct.

It is found in the mitochondrion inner membrane. It carries out the reaction H(+)(in) = H(+)(out). Its function is as follows. Subunit a, of the mitochondrial membrane ATP synthase complex (F(1)F(0) ATP synthase or Complex V) that produces ATP from ADP in the presence of a proton gradient across the membrane which is generated by electron transport complexes of the respiratory chain. ATP synthase complex consist of a soluble F(1) head domain - the catalytic core - and a membrane F(1) domain - the membrane proton channel. These two domains are linked by a central stalk rotating inside the F(1) region and a stationary peripheral stalk. During catalysis, ATP synthesis in the catalytic domain of F(1) is coupled via a rotary mechanism of the central stalk subunits to proton translocation. With the subunit c (ATP5MC1), forms the proton-conducting channel in the F(0) domain, that contains two crucial half-channels (inlet and outlet) that facilitate proton movement from the mitochondrial intermembrane space (IMS) into the matrix. Protons are taken up via the inlet half-channel and released through the outlet half-channel, following a Grotthuss mechanism. This chain is ATP synthase F(0) complex subunit a, found in Tropidurus hispidus (Peters' lava lizard).